A 142-amino-acid polypeptide reads, in one-letter code: Pro-Viral epidermal growth factor (142 aa).

The first 19 residues, 1–19 (MSIKYLMLLFAAMIIRSLA), serve as a signal peptide directing secretion. Over 20 to 104 (DSGNAIETTS…DTTTSYIPSL (85 aa)) the chain is Extracellular. An N-linked (GlcNAc...) asparagine; by host glycan is attached at asparagine 34. A disulfide bridge connects residues cysteine 71 and cysteine 80. A helical transmembrane segment spans residues 105 to 125 (GIVLVLVGIIITCCLLSVYMF). At 126-142 (TRRTKLPIQDMVVLYFL) the chain is on the cytoplasmic side.

This sequence belongs to the orthopoxvirus OPG019 family. In terms of assembly, interacts with host EGFR. In terms of processing, cleaved at the cell surface by host ADAM10, thereby releasing the secreted form of VGF.

It is found in the host membrane. The protein resides in the secreted. Functionally, stimulates cellular proliferation (hyperplasia)and mobility around infected cells to promote rapid and efficient spread of infection. This effect is beneficial for virus replication in vivo, because poxviruses replicate possibly better in proliferating cells than in quiescent cells. Acts by binding host EGFR, inducing its dimerization, autophosphorylation and leading to activation of several cellular pathways regulating cell proliferation or cell survival. The activation by host EGFR of mitogen activated protein kinases (MAPK) and extracellular-signal regulated kinases (ERK) are essential for the positive effect of vaccinia growth factor on poxvirus virulence in vivo. In Cynomys gunnisoni (Gunnison's prairie dog), this protein is Pro-Viral epidermal growth factor (OPG019).